The sequence spans 1953 residues: tRNA (32-2'-O)-methyltransferase regulator THADA (1953 aa).

Positions 886–918 (ERNTLMVIKCLMENLEEEVSQAENSLLQAAAAF) form a coiled coil. Residues Ser1015, Ser1024, and Ser1161 each carry the phosphoserine modification.

It belongs to the THADA family. As to expression, expressed in pancreas, adrenal medulla, thyroid, adrenal cortex, testis, thymus, small intestine and stomach.

In terms of biological role, together with methyltransferase FTSJ1, methylates the 2'-O-ribose of nucleotides at position 32 of the anticodon loop of substrate tRNAs. In Homo sapiens (Human), this protein is tRNA (32-2'-O)-methyltransferase regulator THADA (THADA).